The sequence spans 400 residues: Acyl-CoA dehydrogenase FadE26 (400 aa).

FAD is bound by residues 127 to 130 (IGYS), Thr-136, and Ser-162. Glu-247 serves as the catalytic Proton acceptor. 380-382 (TNE) lines the FAD pocket.

It belongs to the acyl-CoA dehydrogenase family. Heterotetramer (dimer of heterodimers) composed of FadE26 and FadE27. It depends on FAD as a cofactor.

The enzyme catalyses (25S)-3-oxocholest-4-en-26-oyl-CoA + A = 3-oxo-cholest-4,24-dien-26-oyl-CoA + AH2. The protein operates within steroid metabolism; cholesterol degradation. Uncompetitively inhibited by high concentration of 3-OCS-CoA. Its function is as follows. Involved in the first cycle of side chain dehydrogenation in the beta-oxidation of cholesterol catabolism. It contributes partly to the virulence by increasing the efficiency of beta-oxidation. Catalyzes the dehydrogenation of acyl-CoA ester side chains of (25S)-3-oxo-cholest-4-en-26-oyl-CoA (3-OCS-CoA) to yield (24E)-3-oxo-cholest-4,24-dien-26-oyl-CoA. Also able to dehydrogenate steroyl-CoA such as 3-oxo-chol-4-en-24-oyl-CoA (3-OCO-CoA) as well as 3-oxo-4-pregnene-20-carboxyl-CoA (3-OPC-CoA). It dehydrogenates only (25S)-OCS-CoA diastereomer. The polypeptide is Acyl-CoA dehydrogenase FadE26 (fadE26) (Mycobacterium tuberculosis (strain ATCC 25618 / H37Rv)).